The sequence spans 113 residues: uncharacterized protein (113 aa).

This sequence to H.influenzae HI_1053 and P.denitrificans COX locus Uncharacterized protein 4.

This is an uncharacterized protein from Cupriavidus necator (strain ATCC 17699 / DSM 428 / KCTC 22496 / NCIMB 10442 / H16 / Stanier 337) (Ralstonia eutropha).